Here is a 476-residue protein sequence, read N- to C-terminus: Aspartyl/glutamyl-tRNA(Asn/Gln) amidotransferase subunit B (476 aa).

This sequence belongs to the GatB/GatE family. GatB subfamily. As to quaternary structure, heterotrimer of A, B and C subunits.

The enzyme catalyses L-glutamyl-tRNA(Gln) + L-glutamine + ATP + H2O = L-glutaminyl-tRNA(Gln) + L-glutamate + ADP + phosphate + H(+). It carries out the reaction L-aspartyl-tRNA(Asn) + L-glutamine + ATP + H2O = L-asparaginyl-tRNA(Asn) + L-glutamate + ADP + phosphate + 2 H(+). Functionally, allows the formation of correctly charged Asn-tRNA(Asn) or Gln-tRNA(Gln) through the transamidation of misacylated Asp-tRNA(Asn) or Glu-tRNA(Gln) in organisms which lack either or both of asparaginyl-tRNA or glutaminyl-tRNA synthetases. The reaction takes place in the presence of glutamine and ATP through an activated phospho-Asp-tRNA(Asn) or phospho-Glu-tRNA(Gln). This is Aspartyl/glutamyl-tRNA(Asn/Gln) amidotransferase subunit B from Lactobacillus gasseri (strain ATCC 33323 / DSM 20243 / BCRC 14619 / CIP 102991 / JCM 1131 / KCTC 3163 / NCIMB 11718 / NCTC 13722 / AM63).